The following is a 153-amino-acid chain: uncharacterized protein (153 aa).

An N-terminal signal peptide occupies residues 1 to 19; the sequence is MRKYIPLVLFIFSWPVLCA. Residues R46, E54, and R88 contribute to the active site.

This sequence belongs to the thermonuclease family.

This is an uncharacterized protein from Escherichia coli.